The primary structure comprises 273 residues: Diadenylate cyclase (273 aa).

3 helical membrane-spanning segments follow: residues 12 to 32, 37 to 57, and 61 to 81; these read LANI…IMLI, AVQL…SGFF, and TVEW…IIIF. Positions 82 to 242 constitute a DAC domain; that stretch reads QPELRRALET…GGELFRDVSE (161 aa).

This sequence belongs to the adenylate cyclase family. DacA/CdaA subfamily. In terms of assembly, probably a homodimer.

The protein localises to the cell membrane. The enzyme catalyses 2 ATP = 3',3'-c-di-AMP + 2 diphosphate. Functionally, catalyzes the condensation of 2 ATP molecules into cyclic di-AMP (c-di-AMP), a signaling compound secreted into the host's cytosol where it triggers the cytosolic surveillance pathway (CSP), a host pathway of innate immunity characterized by expression of beta interferon (IFN-beta) and coregulated genes. Overexpression increases export of c-di-AMP. c-di-AMP is a second messenger that mediates growth, cell wall stability and virulence. The chain is Diadenylate cyclase from Listeria monocytogenes serotype 1/2a (strain 10403S).